Consider the following 199-residue polypeptide: COMM domain-containing protein 2 (199 aa).

Residues 123–190 form the COMM domain; it reads SYHNLEWRLD…QALEEMKTNH (68 aa).

Belongs to the COMM domain-containing protein 2 family. In terms of assembly, component of the commander complex consisting of the CCC subcomplex and the retriever subcomplex. Component of the CCC (COMMD/CCDC22/CCDC93) subcomplex consisting of COMMD1, COMMD2, COMMD3, COMMD4, COMMD5, COMMD6, COMMD7, COMMD8, COMMD9, COMMD10, CCDC22 and CCDC93; within the complex forms a heterodimer with COMMD3. Interacts with RELA, RELB, NFKB1/p105, NFKB2/p100. Interacts with CCDC22, CCDC93, SCNN1B, CUL3, CUL4B, CUL5, CUL7. Ubiquitous.

The protein localises to the cytoplasm. Its function is as follows. Scaffold protein in the commander complex that is essential for endosomal recycling of transmembrane cargos; the commander complex is composed of the CCC subcomplex and the retriever subcomplex. May modulate activity of cullin-RING E3 ubiquitin ligase (CRL) complexes. May down-regulate activation of NF-kappa-B. This Homo sapiens (Human) protein is COMM domain-containing protein 2 (COMMD2).